Reading from the N-terminus, the 20-residue chain is Antifreeze protein (20 aa).

In terms of processing, N-glycosylated and O-glycosylated.

The protein resides in the secreted. It localises to the extracellular space. In terms of biological role, antifreeze proteins bind to the surface of ice crystals and inhibit the growth of these crystals, this inhibition causes thermal hysteresis. Causes the shape of ice crystals to change from hexagonal to a bipyramidal shape with rugged facets. Inhibits recrystallization of ice crystals. This chain is Antifreeze protein, found in Antarctomyces psychrotrophicus.